The primary structure comprises 344 residues: GPALPP motifs-containing protein 1 (344 aa).

The segment at 1–309 is disordered; that stretch reads MARDLIGPAL…QERIPFDRDK (309 aa). At Ala-2 the chain carries N-acetylalanine. Positions 7-12 match the GPALPP motif 1 motif; that stretch reads GPALPP. Position 28 is a phosphoserine (Ser-28). The GPALPP motif 2 signature appears at 30–35; it reads GPALPP. Composition is skewed to acidic residues over residues 58–67 and 80–93; these read GNQESEEDDT and DDND…DDDG. Positions 96–101 match the GPALPP motif 3 motif; the sequence is GPALPP. Ser-109 bears the Phosphoserine mark. Residues 111-120 show a composition bias toward pro residues; the sequence is PRPIIGPALP. The short motif at 116 to 121 is the GPALPP motif 4 element; the sequence is GPALPP. Residues 128-137 are compositionally biased toward basic and acidic residues; that stretch reads QKSDKGRDDP. Thr-142 carries the phosphothreonine modification. Residues Ser-144 and Ser-145 each carry the phosphoserine modification. 4 stretches are compositionally biased toward basic and acidic residues: residues 167-191, 231-265, 273-283, and 291-309; these read EFEK…KPIV, PADR…KRLA, ESKRSESLMDI, and KAAE…DRDK. Lys-275 is covalently cross-linked (Glycyl lysine isopeptide (Lys-Gly) (interchain with G-Cter in SUMO2)). Residue Lys-312 forms a Glycyl lysine isopeptide (Lys-Gly) (interchain with G-Cter in SUMO2) linkage.

This is GPALPP motifs-containing protein 1 (GPALPP1) from Pongo abelii (Sumatran orangutan).